Consider the following 393-residue polypeptide: Ribonucleoside-diphosphate reductase subunit M2 (393 aa).

Residue Ser-18 is modified to Phosphoserine. Residues Asp-142, Glu-173, and His-176 each contribute to the Fe cation site. Residue Tyr-180 is part of the active site. Residues Glu-236, Glu-270, and His-273 each contribute to the Fe cation site.

The protein belongs to the ribonucleoside diphosphate reductase small chain family. As to quaternary structure, heterodimer of a large and a small subunit. Requires Fe cation as cofactor.

The protein localises to the cytoplasm. It catalyses the reaction a 2'-deoxyribonucleoside 5'-diphosphate + [thioredoxin]-disulfide + H2O = a ribonucleoside 5'-diphosphate + [thioredoxin]-dithiol. Its function is as follows. Provides the precursors necessary for DNA synthesis. Catalyzes the biosynthesis of deoxyribonucleotides from the corresponding ribonucleotides. This chain is Ribonucleoside-diphosphate reductase subunit M2 (RnrS), found in Drosophila melanogaster (Fruit fly).